The primary structure comprises 500 residues: Putative glucokinase-2 (500 aa).

Ser2 is modified (N-acetylserine). Ser2 is subject to Phosphoserine. The Hexokinase domain occupies 12–498 (EALEDAVVEI…SGVGAALCAL (487 aa)). The interval 74–217 (NGTERGVLLA…LSMINVVALT (144 aa)) is hexokinase small subdomain. Lys110 contributes to the ATP binding site. The tract at residues 159–185 (KMGFTFSYPVDQTSLSSGTLIRWTKSF) is glucose-binding. Positions 218 to 487 (NDTVGTFLSH…RKIHLRLAKD (270 aa)) are hexokinase large subdomain. At Ser470 the chain carries Phosphoserine. 487–492 (DGSGVG) provides a ligand contact to ATP.

Belongs to the hexokinase family.

The protein resides in the cytoplasm. The enzyme catalyses D-glucose + ATP = D-glucose 6-phosphate + ADP + H(+). The protein operates within carbohydrate degradation; glycolysis; D-glyceraldehyde 3-phosphate and glycerone phosphate from D-glucose: step 1/4. Functionally, putative glucokinase involved in phosphorylation of aldohexoses and glucose uptake. Involved in sporulation. Required for the full activation of the early meiotic inducer IME1. In Saccharomyces cerevisiae (strain ATCC 204508 / S288c) (Baker's yeast), this protein is Putative glucokinase-2 (EMI2).